The chain runs to 390 residues: Phosphopentomutase (390 aa).

Mn(2+)-binding residues include aspartate 11, aspartate 283, histidine 288, aspartate 324, histidine 325, and histidine 336.

It belongs to the phosphopentomutase family. The cofactor is Mn(2+).

The protein resides in the cytoplasm. The enzyme catalyses 2-deoxy-alpha-D-ribose 1-phosphate = 2-deoxy-D-ribose 5-phosphate. It catalyses the reaction alpha-D-ribose 1-phosphate = D-ribose 5-phosphate. It participates in carbohydrate degradation; 2-deoxy-D-ribose 1-phosphate degradation; D-glyceraldehyde 3-phosphate and acetaldehyde from 2-deoxy-alpha-D-ribose 1-phosphate: step 1/2. Functionally, isomerase that catalyzes the conversion of deoxy-ribose 1-phosphate (dRib-1-P) and ribose 1-phosphate (Rib-1-P) to deoxy-ribose 5-phosphate (dRib-5-P) and ribose 5-phosphate (Rib-5-P), respectively. The sequence is that of Phosphopentomutase from Clostridium acetobutylicum (strain ATCC 824 / DSM 792 / JCM 1419 / IAM 19013 / LMG 5710 / NBRC 13948 / NRRL B-527 / VKM B-1787 / 2291 / W).